The sequence spans 379 residues: Anhydro-N-acetylmuramic acid kinase (379 aa).

9-16 (GTSVDGID) contacts ATP.

The protein belongs to the anhydro-N-acetylmuramic acid kinase family.

It carries out the reaction 1,6-anhydro-N-acetyl-beta-muramate + ATP + H2O = N-acetyl-D-muramate 6-phosphate + ADP + H(+). It functions in the pathway amino-sugar metabolism; 1,6-anhydro-N-acetylmuramate degradation. The protein operates within cell wall biogenesis; peptidoglycan recycling. Catalyzes the specific phosphorylation of 1,6-anhydro-N-acetylmuramic acid (anhMurNAc) with the simultaneous cleavage of the 1,6-anhydro ring, generating MurNAc-6-P. Is required for the utilization of anhMurNAc either imported from the medium or derived from its own cell wall murein, and thus plays a role in cell wall recycling. This Acaryochloris marina (strain MBIC 11017) protein is Anhydro-N-acetylmuramic acid kinase.